An 879-amino-acid polypeptide reads, in one-letter code: Metabotropic glutamate receptor 3 (879 aa).

The N-terminal stretch at 1-22 (MKMLTRLQILMLALFSKGFLLS) is a signal peptide. Residues 23–576 (LGDHNFMRRE…EDYIKWEDAW (554 aa)) are Extracellular-facing. A disulfide bridge links cysteine 57 with cysteine 99. L-glutamate-binding positions include arginine 68, serine 151, and 172–174 (AST). N-linked (GlcNAc...) asparagine glycosylation occurs at asparagine 209. An L-glutamate-binding site is contributed by tyrosine 222. 7 disulfides stabilise this stretch: cysteine 240–cysteine 527, cysteine 361–cysteine 373, cysteine 412–cysteine 419, cysteine 509–cysteine 528, cysteine 513–cysteine 531, cysteine 534–cysteine 546, and cysteine 549–cysteine 562. N-linked (GlcNAc...) asparagine glycosylation is present at asparagine 292. Aspartate 301 contacts L-glutamate. Lysine 389 serves as a coordination point for L-glutamate. N-linked (GlcNAc...) asparagine glycans are attached at residues asparagine 414 and asparagine 439. A helical membrane pass occupies residues 577–599 (AIGPVTIACLGFLCTCIVITVFI). Over 600–613 (KHNNTPLVKASGRE) the chain is Cytoplasmic. The chain crosses the membrane as a helical span at residues 614 to 634 (LCYILLFGVSLSYCMTFFFIA). Residues 635 to 645 (KPSPVICALRR) lie on the Extracellular side of the membrane. Residues 646 to 664 (LGLGTSFAICYSALLTKTN) form a helical membrane-spanning segment. Residues 665–688 (CIARIFDGVKNGAQRPKFISPSSQ) are Cytoplasmic-facing. Residues 689–709 (VFICLGLILVQIVMVSVWLIL) traverse the membrane as a helical segment. Residues 710-734 (ETPGTRRYTLPEKRETVILKCNVKD) are Extracellular-facing. A helical transmembrane segment spans residues 735–756 (SSMLISLTYDVVLVILCTVYAF). Residues 757-769 (KTRKCPENFNEAK) are Cytoplasmic-facing. A helical transmembrane segment spans residues 770 to 792 (FIGFTMYTTCIIWLAFLPIFYVT). Residues 793 to 802 (SSDYRVQTTT) are Extracellular-facing. A helical membrane pass occupies residues 803–828 (MCISVSLSGFVVLGCLFAPKVHIVLF). Residues 829–879 (QPQKNVVTHRLHLNRFSVSGTATTYSQSSASTYVPTVCNGREVLDSTTSSL) lie on the Cytoplasmic side of the membrane.

This sequence belongs to the G-protein coupled receptor 3 family. As to quaternary structure, interacts with TAMALIN. As to expression, is widely distributed in the CNS. Predominant expression is seen in the neuronal cells of the cerebral cortex, dentate gyrus, and glial cells throughout brain regions.

The protein localises to the cell membrane. G-protein coupled receptor for glutamate. Ligand binding causes a conformation change that triggers signaling via guanine nucleotide-binding proteins (G proteins) and modulates the activity of down-stream effectors. Signaling inhibits adenylate cyclase activity. The chain is Metabotropic glutamate receptor 3 (Grm3) from Rattus norvegicus (Rat).